The primary structure comprises 165 residues: Immunity protein YokJ (165 aa).

In terms of assembly, probably interacts with cognate toxin YokI but not with other non-cognate toxins. The interaction inhibits the toxic activity of YokI.

It localises to the cytoplasm. Its function is as follows. Immunity component of one of 6 LXG toxin-immunity modules in this strain. They promote kin selection, mediate competition in biofilms, and drive spatial segregation of different strains, indicating that LXG toxins may help avoid warfare between strains in biofilms. Mediates intercellular competition during biofilm formation; disruption of the operon disadvantages the bacteria, but overexpression of the cognate immunity protein restores growth in competition with wild-type. In situ neutralizes the toxic effect of cognate toxin YokI. Neutralizes the ability to inhibit growth of cognate toxin YokI upon expression in E.coli. Does not have immunity protein activity on other LXG toxins. This chain is Immunity protein YokJ (yokJ), found in Bacillus subtilis (strain 168).